Here is a 150-residue protein sequence, read N- to C-terminus: Large ribosomal subunit protein bL9 (150 aa).

It belongs to the bacterial ribosomal protein bL9 family.

Its function is as follows. Binds to the 23S rRNA. This chain is Large ribosomal subunit protein bL9, found in Ruthia magnifica subsp. Calyptogena magnifica.